An 82-amino-acid polypeptide reads, in one-letter code: Small ribosomal subunit protein bS16 (82 aa).

This sequence belongs to the bacterial ribosomal protein bS16 family.

In Yersinia pseudotuberculosis serotype O:1b (strain IP 31758), this protein is Small ribosomal subunit protein bS16.